The primary structure comprises 89 residues: Small ribosomal subunit protein uS15 (89 aa).

It belongs to the universal ribosomal protein uS15 family. As to quaternary structure, part of the 30S ribosomal subunit. Forms a bridge to the 50S subunit in the 70S ribosome, contacting the 23S rRNA.

Its function is as follows. One of the primary rRNA binding proteins, it binds directly to 16S rRNA where it helps nucleate assembly of the platform of the 30S subunit by binding and bridging several RNA helices of the 16S rRNA. Forms an intersubunit bridge (bridge B4) with the 23S rRNA of the 50S subunit in the ribosome. In Photobacterium profundum (strain SS9), this protein is Small ribosomal subunit protein uS15.